The sequence spans 121 residues: uncharacterized protein (121 aa).

77 to 84 (AALSFGKT) serves as a coordination point for ATP.

This is an uncharacterized protein from Saccharomyces cerevisiae (strain ATCC 204508 / S288c) (Baker's yeast).